The sequence spans 493 residues: Voltage-gated potassium channel regulatory subunit KCNF1 (493 aa).

The Cytoplasmic portion of the chain corresponds to 1–183; sequence MDASAEQSLP…KPESSCPARV (183 aa). The helical transmembrane segment at 184–204 threads the bilayer; sequence VAVLSFLLILVSSVVMCMGTI. The Extracellular portion of the chain corresponds to 205 to 223; that stretch reads PELQVVDSEGNRVEHPTLE. A helical membrane pass occupies residues 224–244; sequence NVETACIGWFTLEYLLRLFSS. Over 245-249 the chain is Cytoplasmic; it reads PNKLH. The helical transmembrane segment at 250 to 270 threads the bilayer; it reads FALSFMNIVDVLAILPFYVSL. Residues 271-289 lie on the Extracellular side of the membrane; it reads TLTHLGARMMELTNVQQAV. The chain crosses the membrane as a helical; Voltage-sensor span at residues 290-310; sequence QALRIMRIARIFKLARHSSGL. Residues 311–324 lie on the Cytoplasmic side of the membrane; sequence QTLTYALKRSFKEL. Residues 325–345 form a helical membrane-spanning segment; it reads GLLLMYLAVGIFVFSALGYTM. The Extracellular portion of the chain corresponds to 346 to 357; sequence EQSHPETLFKSI. Residues 358–378 constitute an intramembrane region (pore-forming); that stretch reads PQSFWWAIITMTTVGYGDIYP. A Selectivity filter motif is present at residues 370 to 375; sequence TVGYGD. Over 379-385 the chain is Extracellular; sequence KTTLGKL. The helical transmembrane segment at 386-406 threads the bilayer; the sequence is NAAISFLCGVIAIALPIHPII. At 407–493 the chain is on the cytoplasmic side; sequence NNFVRYYNKQ…HHRTRLQSCK (87 aa). The interval 433-468 is disordered; that stretch reads NSSSAESKPGGSRSDLDTLPPEPAAREGPSWGSRLK.

It belongs to the potassium channel family. F (TC 1.A.1.2) subfamily. Kv5.1/KCNF1 sub-subfamily. As to quaternary structure, heterotetramer with KCNB1 or KCNB2. Expressed in brain namely in the piriform cortex, olfactory tubercle, and medial habenular nucleus. Also expressed in the medial amygdaloid nuclei and the lateral amygdaloid area.

The protein resides in the cell membrane. Its function is as follows. Regulatory alpha-subunit of the voltage-gated potassium (Kv) channel which, when coassembled with KCNB1 or KCNB2, can modulate their expression and their gating kinetics by acting on deactivation upon repolarization and inactivation during maintained depolarization. Accelerates inactivation but has relatively little effect on deactivation. Coexpression with KCNB1 or KCNB2 markedly slows inactivation. Each modulatory subunit has its own specific properties of regulation, and can lead to extensive inhibitions, to large changes in kinetics, and/or to large shifts in the voltage dependencies of the inactivation process. The gating kinetics depends on the nature and stoichiometry of the associated regulatory sunbunit. Fails to produce a potassium current when expressed alone. The protein is Voltage-gated potassium channel regulatory subunit KCNF1 of Rattus norvegicus (Rat).